A 333-amino-acid polypeptide reads, in one-letter code: Protein APEM9 (333 aa).

At 1–90 the chain is on the cytoplasmic side; it reads MEATDIWGEI…ELRDVFGEVA (90 aa). A helical transmembrane segment spans residues 91-102; that stretch reads AIPVQVLLTGVC. At 103-268 the chain is on the peroxisomal side; the sequence is LQISNGSYLG…KVGNTQFSMS (166 aa). Residues 269 to 285 form a helical membrane-spanning segment; it reads RGKVAVSLVGLIICYAL. Over 286–333 the chain is Cytoplasmic; the sequence is KRKRAALIRIIRRQMESTRKAIVDFWKLAFSYQVNPLAAIQSIPSTTT.

In terms of assembly, interacts with PEX6 and PEX19-1, but not with PEX1. Interacts (via N-terminus) with PEX13, and (via N-terminus and C-terminus) with PEX16. In terms of tissue distribution, expressed in roots, leaves, stems, flowers, buds and fruits.

It localises to the peroxisome membrane. Involved in peroxisome biogenesis and matrix protein import. Required for pollen maturation and in vivo germination via its role in peroxisomal function, which partially involves jasmonic acid biosynthesis. Transported to peroxisomes via the interaction with PEX19-1. Required for peroxisomal protein import by acting as an anchoring protein for the AAA ATPase complex, which consists of PEX1 and PEX6. This Arabidopsis thaliana (Mouse-ear cress) protein is Protein APEM9.